The primary structure comprises 413 residues: Multifunctional CCA protein (413 aa).

ATP contacts are provided by Gly8 and Arg11. CTP contacts are provided by Gly8 and Arg11. The Mg(2+) site is built by Asp21 and Asp23. Residues Arg91, Arg137, and Arg140 each contribute to the ATP site. CTP-binding residues include Arg91, Arg137, and Arg140. Positions 228 to 329 (TGVHTLMTLS…VKLFDAIDAW (102 aa)) constitute an HD domain.

This sequence belongs to the tRNA nucleotidyltransferase/poly(A) polymerase family. Bacterial CCA-adding enzyme type 1 subfamily. In terms of assembly, monomer. Can also form homodimers and oligomers. Mg(2+) is required as a cofactor. Ni(2+) serves as cofactor.

The catalysed reaction is a tRNA precursor + 2 CTP + ATP = a tRNA with a 3' CCA end + 3 diphosphate. The enzyme catalyses a tRNA with a 3' CCA end + 2 CTP + ATP = a tRNA with a 3' CCACCA end + 3 diphosphate. Its function is as follows. Catalyzes the addition and repair of the essential 3'-terminal CCA sequence in tRNAs without using a nucleic acid template. Adds these three nucleotides in the order of C, C, and A to the tRNA nucleotide-73, using CTP and ATP as substrates and producing inorganic pyrophosphate. tRNA 3'-terminal CCA addition is required both for tRNA processing and repair. Also involved in tRNA surveillance by mediating tandem CCA addition to generate a CCACCA at the 3' terminus of unstable tRNAs. While stable tRNAs receive only 3'-terminal CCA, unstable tRNAs are marked with CCACCA and rapidly degraded. In Salmonella schwarzengrund (strain CVM19633), this protein is Multifunctional CCA protein.